The sequence spans 230 residues: ATP synthase subunit a (230 aa).

Helical transmembrane passes span 26–46, 83–103, 112–132, 143–163, 182–202, and 203–223; these read ANAVVYTWTVIVLLLVLSLIA, FFPLIATLAIFILVSNLVGLI, NVNTTAACAIVVFLATHVVGI, FMGPIWWLAPLMFFIEVIGHL, LVLMIFFALAPFLVPLPMMLM, and GVLVSFIQAFVFMLLAMIYIQ.

Belongs to the ATPase A chain family. F-type ATPases have 2 components, CF(1) - the catalytic core - and CF(0) - the membrane proton channel. CF(1) has five subunits: alpha(3), beta(3), gamma(1), delta(1), epsilon(1). CF(0) has three main subunits: a(1), b(2) and c(9-12). The alpha and beta chains form an alternating ring which encloses part of the gamma chain. CF(1) is attached to CF(0) by a central stalk formed by the gamma and epsilon chains, while a peripheral stalk is formed by the delta and b chains.

It localises to the cell inner membrane. In terms of biological role, key component of the proton channel; it plays a direct role in the translocation of protons across the membrane. This Trichlorobacter lovleyi (strain ATCC BAA-1151 / DSM 17278 / SZ) (Geobacter lovleyi) protein is ATP synthase subunit a.